A 145-amino-acid polypeptide reads, in one-letter code: Large ribosomal subunit protein uL15 (145 aa).

Basic residues-rich tracts occupy residues 1–13 (MIRK…KQRG) and 22–33 (TKKRRGAGHRGG). A disordered region spans residues 1–41 (MIRKTKKIRKQRGSRSVGGGCTKKRRGAGHRGGRGQAGGNK).

This sequence belongs to the universal ribosomal protein uL15 family. In terms of assembly, part of the 50S ribosomal subunit.

Its function is as follows. Binds to the 23S rRNA. This chain is Large ribosomal subunit protein uL15, found in Methanosphaera stadtmanae (strain ATCC 43021 / DSM 3091 / JCM 11832 / MCB-3).